The primary structure comprises 303 residues: MNPEQIKTALGSGLLSFPVTHFDAEGRFAADSYREHVEWLAGYKAPVLFAAGGTGEFFSLKPDEIPTIVAAAKEVAGETAIVSGCGYGTEIAVDIARSVEKVGADGILLLPHYLIDAPQEGLYAHIKKVCQSVGIGVMVYNRDNSVLQADTLARLCDECPNLVGFKDGTGDIGLVRQITAKMGDRLMYLGGMPTAELFAEAYLGAGFTTYSSAVFNFVPGLANEFYAALRAGERATCERILVDFFYPFMAIRNRAKGYAVSAVKAGVRLQGFNAGPVRAPLKDLTNEEIGMLEALIGTHKRKA.

The protein belongs to the DapA family.

It catalyses the reaction 5-dehydro-4-deoxy-D-glucarate + H(+) = 2,5-dioxopentanoate + CO2 + H2O. It functions in the pathway carbohydrate acid metabolism; D-glucarate degradation; 2,5-dioxopentanoate from D-glucarate: step 2/2. This is Probable 5-dehydro-4-deoxyglucarate dehydratase from Agrobacterium fabrum (strain C58 / ATCC 33970) (Agrobacterium tumefaciens (strain C58)).